The following is a 390-amino-acid chain: Malonyl-CoA-acyl carrier protein transacylase, mitochondrial (390 aa).

The N-terminal 21 residues, 1–21 (MSVRVARVAWVRGLGASYRRG), are a transit peptide targeting the mitochondrion. Active-site residues include Ser-153 and His-270. Position 314 is an N6-succinyllysine (Lys-314).

The protein belongs to the type II malonyltransferase family.

The protein resides in the mitochondrion. It catalyses the reaction holo-[ACP] + malonyl-CoA = malonyl-[ACP] + CoA. It functions in the pathway lipid metabolism; fatty acid biosynthesis. Functionally, catalyzes the transfer of a malonyl moiety from malonyl-CoA to the free thiol group of the phosphopantetheine arm of the mitochondrial ACP protein (NDUFAB1). This suggests the existence of the biosynthesis of fatty acids in mitochondria. Also acts as a mitochondrial small ribosomal subunit (mt-SSU) assembly factor. The sequence is that of Malonyl-CoA-acyl carrier protein transacylase, mitochondrial from Homo sapiens (Human).